The sequence spans 180 residues: Shikimate kinase (180 aa).

14–19 (GAGKSS) contacts ATP. Serine 18 is a binding site for Mg(2+). Substrate-binding residues include aspartate 36, arginine 60, and glycine 82. ATP is bound at residue arginine 120. Position 139 (arginine 139) interacts with substrate.

This sequence belongs to the shikimate kinase family. As to quaternary structure, monomer. Mg(2+) is required as a cofactor.

The protein localises to the cytoplasm. The catalysed reaction is shikimate + ATP = 3-phosphoshikimate + ADP + H(+). The protein operates within metabolic intermediate biosynthesis; chorismate biosynthesis; chorismate from D-erythrose 4-phosphate and phosphoenolpyruvate: step 5/7. Functionally, catalyzes the specific phosphorylation of the 3-hydroxyl group of shikimic acid using ATP as a cosubstrate. This Xylella fastidiosa (strain M12) protein is Shikimate kinase.